The primary structure comprises 644 residues: MRLSHVLLGTAAAAGVLASPTPNDYVVHERRAVLPRSWTEEKRLDKASILPMRIGLTQSNLDRGHDLLMEISDPRSSRYGQHLSVEEVHSLFAPSQETVDRVRAWLESEGIAGDRISQSSNEQFLQFDASAAEVERLLGTEYYLYTHQGSGKSHIACREYHVPHSLQRHIDYITPGIKLLEVEGVKKARSIEKRSFRSPLPPILERLTLPLSELLGNTLLCDVAITPLCISALYNITRGSKATKGNELGIFEDLGDVYSQEDLNLFFSTFAQQIPQGTHPILKAVDGAQAPTSVTNAGPESDLDFQISYPIIWPQNSILFQTDDPNYTANYNFSGFLNTFLDAIDGSYCSEISPLDPPYPNPADGGYKGQLQCGVYQPPKVLSISYGGAEADLPIAYQRRQCAEWMKLGLQGVSVVVASGDSGVEGRNGDPTPTECLGTEGKVFAPDFPATCPYLTTVGGTYLPLGADPRKDEEVAVTSFPSGGGFSNIYERADYQQQAVEDYFSRADPGYPFYESVDNSSFAENGGIYNRIGRAYPDVAAIADNVVIFNKGMPTLIGGTSAAAPVFAAILTRINEERLAVGKSTVGFVNPVLYAHPEVFNDITQGSNPGCGMQGFSAATGWDPVTGLGTPNYPALLDLFMSLP.

Positions 1–18 (MRLSHVLLGTAAAAGVLA) are cleaved as a signal peptide. Positions 19-196 (SPTPNDYVVH…KARSIEKRSF (178 aa)) are cleaved as a propeptide — removed in mature form. The Peptidase S53 domain occupies 224 to 643 (AITPLCISAL…PALLDLFMSL (420 aa)). The N-linked (GlcNAc...) asparagine glycan is linked to Asn-235. Residues Glu-300 and Asp-304 each act as charge relay system in the active site. Residues Asn-326, Asn-332, and Asn-519 are each glycosylated (N-linked (GlcNAc...) asparagine). The Charge relay system role is filled by Ser-561. The Ca(2+) site is built by Asp-602, Ile-603, Gly-621, and Asp-623.

Ca(2+) serves as cofactor. In terms of processing, N-glycosylated.

It is found in the secreted. The protein localises to the extracellular space. The enzyme catalyses Release of an N-terminal tripeptide from a polypeptide.. In terms of biological role, secreted tripeptidyl-peptidase which degrades proteins at acidic pHs and is involved in virulence. This Aspergillus fumigatus (strain ATCC MYA-4609 / CBS 101355 / FGSC A1100 / Af293) (Neosartorya fumigata) protein is Tripeptidyl-peptidase sed1 (sed1).